The sequence spans 498 residues: DELTA-thalatoxin-Avl2a (498 aa).

A signal peptide spans 1 to 22; that stretch reads MSPYFKLSSALIFLAITMEALC. Positions 23–35 are excised as a propeptide; that stretch reads SPIENTSTSNKDN. Residues 23 to 359 form the MACPF domain; the sequence is SPIENTSTSN…GFLHFGCSFL (337 aa). Residues 135–159 adopt a coiled-coil conformation; that stretch reads AAVTNNIASSEEEVQGLSLNLKAYS. Cystine bridges form between C389–C402, C396–C410, and C412–C422. The EGF-like domain occupies 410 to 422; it reads CECGGPYDLARTC.

The protein localises to the secreted. Its subcellular location is the nematocyst. In terms of biological role, is lethal to mice, and may cause hemolytic activity. This is DELTA-thalatoxin-Avl2a from Actineria villosa (Okinawan sea anemone).